Consider the following 328-residue polypeptide: Lipoyl synthase (328 aa).

The [4Fe-4S] cluster site is built by Cys-56, Cys-61, Cys-67, Cys-82, Cys-86, Cys-89, and Ser-293. The region spanning 68 to 282 (WEDREATFLI…ERVGAELGFS (215 aa)) is the Radical SAM core domain.

The protein belongs to the radical SAM superfamily. Lipoyl synthase family. The cofactor is [4Fe-4S] cluster.

It localises to the cytoplasm. The catalysed reaction is [[Fe-S] cluster scaffold protein carrying a second [4Fe-4S](2+) cluster] + N(6)-octanoyl-L-lysyl-[protein] + 2 oxidized [2Fe-2S]-[ferredoxin] + 2 S-adenosyl-L-methionine + 4 H(+) = [[Fe-S] cluster scaffold protein] + N(6)-[(R)-dihydrolipoyl]-L-lysyl-[protein] + 4 Fe(3+) + 2 hydrogen sulfide + 2 5'-deoxyadenosine + 2 L-methionine + 2 reduced [2Fe-2S]-[ferredoxin]. It participates in protein modification; protein lipoylation via endogenous pathway; protein N(6)-(lipoyl)lysine from octanoyl-[acyl-carrier-protein]: step 2/2. Functionally, catalyzes the radical-mediated insertion of two sulfur atoms into the C-6 and C-8 positions of the octanoyl moiety bound to the lipoyl domains of lipoate-dependent enzymes, thereby converting the octanoylated domains into lipoylated derivatives. This is Lipoyl synthase from Frankia alni (strain DSM 45986 / CECT 9034 / ACN14a).